The sequence spans 380 residues: Alcohol dehydrogenase 1 (380 aa).

The Zn(2+) site is built by Cys-48, Thr-50, His-70, Cys-100, Cys-103, Cys-106, Cys-114, and Cys-178. Residues Thr-50 and His-70 each contribute to the an alcohol site. Thr-50 provides a ligand contact to NAD(+). Residues 203–208 (GLGAVG), Asp-227, Arg-232, Thr-273, Val-296, 296–298 (VGV), and Arg-373 each bind NAD(+).

Belongs to the zinc-containing alcohol dehydrogenase family. Homodimer. Zn(2+) is required as a cofactor.

It localises to the cytoplasm. It carries out the reaction a primary alcohol + NAD(+) = an aldehyde + NADH + H(+). The catalysed reaction is a secondary alcohol + NAD(+) = a ketone + NADH + H(+). In Trifolium repens (Creeping white clover), this protein is Alcohol dehydrogenase 1 (ADH1).